Here is a 910-residue protein sequence, read N- to C-terminus: Valine--tRNA ligase (910 aa).

A 'HIGH' region motif is present at residues 45–55; that stretch reads PNVTGSLHMGH. The 'KMSKS' region motif lies at 554–558; it reads KMSKS. Lys-557 serves as a coordination point for ATP. Residues 842–910 are a coiled coil; it reads DLQAEAARLA…TAESRIRDAS (69 aa).

The protein belongs to the class-I aminoacyl-tRNA synthetase family. ValS type 1 subfamily. In terms of assembly, monomer.

The protein localises to the cytoplasm. The enzyme catalyses tRNA(Val) + L-valine + ATP = L-valyl-tRNA(Val) + AMP + diphosphate. Its function is as follows. Catalyzes the attachment of valine to tRNA(Val). As ValRS can inadvertently accommodate and process structurally similar amino acids such as threonine, to avoid such errors, it has a 'posttransfer' editing activity that hydrolyzes mischarged Thr-tRNA(Val) in a tRNA-dependent manner. This Brucella melitensis biotype 1 (strain ATCC 23456 / CCUG 17765 / NCTC 10094 / 16M) protein is Valine--tRNA ligase.